A 250-amino-acid polypeptide reads, in one-letter code: Phosphoribosylaminoimidazole-succinocarboxamide synthase (250 aa).

Belongs to the SAICAR synthetase family.

It carries out the reaction 5-amino-1-(5-phospho-D-ribosyl)imidazole-4-carboxylate + L-aspartate + ATP = (2S)-2-[5-amino-1-(5-phospho-beta-D-ribosyl)imidazole-4-carboxamido]succinate + ADP + phosphate + 2 H(+). The protein operates within purine metabolism; IMP biosynthesis via de novo pathway; 5-amino-1-(5-phospho-D-ribosyl)imidazole-4-carboxamide from 5-amino-1-(5-phospho-D-ribosyl)imidazole-4-carboxylate: step 1/2. In Bifidobacterium longum subsp. infantis (strain ATCC 15697 / DSM 20088 / JCM 1222 / NCTC 11817 / S12), this protein is Phosphoribosylaminoimidazole-succinocarboxamide synthase.